A 149-amino-acid chain; its full sequence is Calmodulin (149 aa).

An N-acetylalanine modification is found at alanine 2. 4 EF-hand domains span residues 8 to 43 (EQIAEFKEAFSLFDKDGDGTITTKELGTVMRSLGQN), 44 to 79 (PTEAELQDMINEVDADGNGTIDFPEFLTMMARKMKD), 81 to 116 (DSEEEIREAFRVFDKDGNGFISAAELRHVMTNLGEK), and 117 to 149 (LTDEEVDEMIREADIDGDGQVNYEEFVKMMTSK). Residues aspartate 21, aspartate 23, aspartate 25, threonine 27, glutamate 32, aspartate 57, aspartate 59, asparagine 61, threonine 63, glutamate 68, aspartate 94, aspartate 96, asparagine 98, and glutamate 105 each contribute to the Ca(2+) site. Position 116 is an N6,N6,N6-trimethyllysine (lysine 116). 5 residues coordinate Ca(2+): aspartate 130, aspartate 132, aspartate 134, glutamine 136, and glutamate 141.

It belongs to the calmodulin family.

In terms of biological role, calmodulin mediates the control of a large number of enzymes, ion channels and other proteins by Ca(2+). Among the enzymes to be stimulated by the calmodulin-Ca(2+) complex are a number of protein kinases and phosphatases. The protein is Calmodulin of Metridium senile (Brown sea anemone).